We begin with the raw amino-acid sequence, 467 residues long: MQFAGKKTDQVTTSNPGFEEEEEEEEELQQDWSQLASLVSKNAALSLPKRGEKDYEPDGTNLQDLLLYNASKAMFDTISDSIRGTTVKSEVRGYYVPHKHQAVLLKPKGSFMQTMGRADSTGELWLDFHEFVYLAERGTILPYYRLEAGSNKSSKHETEILLSMEDLYSLFSSQQEMDQYFVFAHLKRLGFILKPSNQEAAVKTSFFPLKKQRSNLQAITWRLLSLFKIQELSLFSGFFYSKWNFFFRKYTTSPQLYQGLNRLVRSVAVPKNKKELLDAQSDREFQKVKDIPLTFKVWKPHSNFKKRDPGLPDFQVFVYNKNDDLQHFPTYKELRSMFSSLDYKFEFLSEIEDDDDWETNSYVEDIPRKEYIHKRSAKSQTEKSESSMKASFQKKTAQSSTKKKRKAYPPHIQQNRRLKTGYRSFIIAIMDNGLISFVKMSEADFGSESVWYTPNTQKKVDQRWKKH.

Disordered stretches follow at residues 1-32 and 374-413; these read MQFA…QQDW and KRSA…PHIQ. Residues 18 to 29 show a composition bias toward acidic residues; it reads FEEEEEEEEELQ. A compositionally biased stretch (basic residues) spans 401-413; it reads TKKKRKAYPPHIQ.

This sequence belongs to the SEN54 family. TRNA splicing endonuclease is a heterotetramer composed of SEN2, SEN15, SEN34 and SEN54. Interacts directly with SEN2.

It is found in the nucleus. The protein localises to the endomembrane system. Its subcellular location is the mitochondrion outer membrane. Non-catalytic subunit of the tRNA-splicing endonuclease complex, a complex responsible for identification and cleavage of the splice sites in pre-tRNA. It cleaves pre-tRNA at the 5' and 3' splice sites to release the intron. The products are an intron and two tRNA half-molecules bearing 2',3' cyclic phosphate and 5'-OH termini. There are no conserved sequences at the splice sites, but the intron is invariably located at the same site in the gene, placing the splice sites an invariant distance from the constant structural features of the tRNA body. May be required to embody the molecular ruler of the complex. In Saccharomyces cerevisiae (strain ATCC 204508 / S288c) (Baker's yeast), this protein is tRNA-splicing endonuclease subunit SEN54 (SEN54).